A 972-amino-acid chain; its full sequence is Translation initiation factor IF-2 (972 aa).

A compositionally biased stretch (basic and acidic residues) spans 49–63 (HLRKSHGATDGDKRK). Disordered stretches follow at residues 49 to 86 (HLRKSHGATDGDKRKITLTRKHTSEIKQSDATGKARTI) and 100 to 383 (DDVA…TFQA). Positions 105–114 (GAEQGQAQVA) are enriched in low complexity. Basic and acidic residues predominate over residues 121 to 177 (ELKRREEEARREAELLEKQAQELRERQERLEREEAERRAREEAAEAERRRAEEEAAA). Over residues 178-209 (KRAAAAAVEAQQAAAQQAAEAQQETAGAQSAQ) the composition is skewed to low complexity. A compositionally biased stretch (basic and acidic residues) spans 210 to 261 (DEARAAAERAAQREAAKKAEDAAREAADKTRAEQEEIRKRREAAEAEARAIR). Residues 277–286 (PPKPVEPPKP) show a composition bias toward pro residues. The span at 298–327 (KPAGAGAARPAVKKPAGAAPATTQAPAGAG) shows a compositional bias: low complexity. Gly residues predominate over residues 356–369 (SSGGVDRGWRGGPK). Positions 472 to 641 (PRPPVVTVMG…LLQAEVLELK (170 aa)) constitute a tr-type G domain. Residues 481–488 (GHVDHGKT) form a G1 region. GTP is bound at residue 481–488 (GHVDHGKT). Residues 506–510 (GITQH) are G2. The interval 527 to 530 (DTPG) is G3. Residues 527–531 (DTPGH) and 581–584 (NKID) contribute to the GTP site. Positions 581–584 (NKID) are G4. Residues 617–619 (SAK) are G5.

This sequence belongs to the TRAFAC class translation factor GTPase superfamily. Classic translation factor GTPase family. IF-2 subfamily.

It localises to the cytoplasm. In terms of biological role, one of the essential components for the initiation of protein synthesis. Protects formylmethionyl-tRNA from spontaneous hydrolysis and promotes its binding to the 30S ribosomal subunits. Also involved in the hydrolysis of GTP during the formation of the 70S ribosomal complex. This chain is Translation initiation factor IF-2, found in Burkholderia ambifaria (strain MC40-6).